The chain runs to 1020 residues: 26S proteasome non-ATPase regulatory subunit 1 (1020 aa).

Residues 279–322 (TALPSTFKPQGTTSEDGAKSEGDKSKSDEDITEETPADDKVERT) form a disordered region. Positions 281–293 (LPSTFKPQGTTSE) are enriched in polar residues. Thr-291 carries the phosphothreonine modification. Basic and acidic residues predominate over residues 294 to 307 (DGAKSEGDKSKSDE). Ser-298, Ser-303, and Ser-305 each carry phosphoserine. The residue at position 310 (Thr-310) is a Phosphothreonine. 10 PC repeats span residues 418-452 (TATA…SSGY), 456-489 (GALY…ENVR), 491-525 (GGCL…VTGE), 526-560 (AAGI…EKIL), 562-595 (GLAV…VLRR), 596-631 (SGMY…DVRR), 632-664 (AAVT…PHVR), 666-701 (GAAM…FVRQ), 702-742 (GALI…DVMA), and 745-777 (GAIL…QAVV). Disordered stretches follow at residues 855 to 950 (QKRR…NPAR) and 999 to 1020 (FGPM…YIED). Basic and acidic residues-rich tracts occupy residues 858–867 (RENADKKEDE) and 876–939 (KEGA…KEPE). The span at 1003-1020 (NDEEKEPEPPEPFEYIED) shows a compositional bias: acidic residues.

This sequence belongs to the proteasome subunit S1 family.

In terms of biological role, acts as a regulatory subunit of the 26S proteasome which is involved in the ATP-dependent degradation of ubiquitinated proteins. The chain is 26S proteasome non-ATPase regulatory subunit 1 (Rpn2) from Drosophila melanogaster (Fruit fly).